The chain runs to 430 residues: Glutamate-1-semialdehyde 2,1-aminomutase (430 aa).

Lysine 267 is subject to N6-(pyridoxal phosphate)lysine.

This sequence belongs to the class-III pyridoxal-phosphate-dependent aminotransferase family. HemL subfamily. In terms of assembly, homodimer. It depends on pyridoxal 5'-phosphate as a cofactor.

The protein localises to the cytoplasm. It catalyses the reaction (S)-4-amino-5-oxopentanoate = 5-aminolevulinate. It functions in the pathway porphyrin-containing compound metabolism; protoporphyrin-IX biosynthesis; 5-aminolevulinate from L-glutamyl-tRNA(Glu): step 2/2. This Sulfurovum sp. (strain NBC37-1) protein is Glutamate-1-semialdehyde 2,1-aminomutase.